The sequence spans 345 residues: D(2) dopamine receptor B (345 aa).

Residues 1-10 (EWRFSRIHCD) lie on the Extracellular side of the membrane. Cys-9 and Cys-84 are joined by a disulfide. A helical membrane pass occupies residues 11-32 (IFVTLDVMMCTASILNLCAISI). Over 33–53 (DRYTAVAMPMLYNTRYSSKRR) the chain is Cytoplasmic. The chain crosses the membrane as a helical span at residues 54–74 (VTVMISVVWVLSFAISCPLLF). Residues 75–90 (GLNNTASTVCIIDNPA) are Extracellular-facing. N-linked (GlcNAc...) asparagine glycosylation is present at Asn-77. A helical membrane pass occupies residues 91–115 (FVIYSSIVSFYVPFIVTLLVYVQIY). The Cytoplasmic portion of the chain corresponds to 116-275 (IVLRKRRKRV…SQHKEKKATQ (160 aa)). Residues 166-177 (KKKVEAGNHPED) are compositionally biased toward basic and acidic residues. Positions 166-199 (KKKVEAGNHPEDMEMEMMSSTSPPEKTKHKSASP) are disordered. A helical membrane pass occupies residues 276–297 (MLAIVLGVFIICWLPFFITHIL). Residues 298–311 (NMHCNCNIPQALYS) are Extracellular-facing. Cys-301 and Cys-303 are oxidised to a cystine. The chain crosses the membrane as a helical span at residues 312 to 333 (AFTWLGYVNSAVNPIIYTTFNV). The Cytoplasmic portion of the chain corresponds to 334 to 345 (EFRKAFIKILHC). The S-palmitoyl cysteine moiety is linked to residue Cys-345.

Belongs to the G-protein coupled receptor 1 family. Post-translationally, palmitoylated. Palmitoylation is probably required for proper localization to the plasma membrane and stability of the receptor. Brain; pituitary.

The protein localises to the cell membrane. It is found in the golgi apparatus membrane. In terms of biological role, this is one of the five types (D1 to D5) of receptors for dopamine. The activity of this receptor is mediated by G proteins which inhibits adenylyl cyclase. In Xenopus D2R is involved in the regulation of the melanotrope cells of the intermediate pituitary during background adaptation of the animal. The chain is D(2) dopamine receptor B (drd2-b) from Xenopus laevis (African clawed frog).